A 161-amino-acid chain; its full sequence is Alpha-crystallin A chain (161 aa).

A required for complex formation with BFSP1 and BFSP2 region spans residues 1–51 (ALGPFYPSRXXXXXXXXXXXXXXXXXXXXXXXXXXXXQSLFRTVLDSGISE). Gln-38 is subject to Deamidated glutamine; partial. The 111-residue stretch at 40 to 150 (LFRTVLDSGI…SHSERAIPVS (111 aa)) folds into the sHSP domain. Lys-87 carries the N6-acetyllysine modification. Residue His-88 participates in Zn(2+) binding. Position 89 is a deamidated asparagine; partial (Asn-89). Residues Glu-90 and His-95 each contribute to the Zn(2+) site. Position 110 is a phosphoserine (Ser-110). Asn-111 bears the Deamidated asparagine; partial mark. Cys-119 and Cys-130 are joined by a disulfide. Gln-135 carries the post-translational modification Deamidated glutamine; partial. The interval 140–161 (ASHSERAIPVSREEKPSSAPSS) is disordered. The span at 141 to 155 (SHSERAIPVSREEKP) shows a compositional bias: basic and acidic residues. His-142 contributes to the Zn(2+) binding site. Ser-150 carries an O-linked (GlcNAc) serine glycan.

It belongs to the small heat shock protein (HSP20) family. Heteromer composed of three CRYAA and one CRYAB subunits. Inter-subunit bridging via zinc ions enhances stability, which is crucial as there is no protein turn over in the lens. Can also form homodimers and homotetramers (dimers of dimers) which serve as the building blocks of homooligomers. Within homooligomers, the zinc-binding motif is created from residues of 3 different molecules. His-88 and Glu-90 from one molecule are ligands of the zinc ion, and His-95 and His-142 residues from additional molecules complete the site with tetrahedral coordination geometry. Part of a complex required for lens intermediate filament formation composed of BFSP1, BFSP2 and CRYAA. In terms of processing, undergoes age-dependent proteolytical cleavage at the C-terminus.

Its subcellular location is the cytoplasm. The protein localises to the nucleus. In terms of biological role, contributes to the transparency and refractive index of the lens. In its oxidized form (absence of intramolecular disulfide bond), acts as a chaperone, preventing aggregation of various proteins under a wide range of stress conditions. Required for the correct formation of lens intermediate filaments as part of a complex composed of BFSP1, BFSP2 and CRYAA. The polypeptide is Alpha-crystallin A chain (CRYAA) (Galegeeska rufescens (East African rufous sengi)).